A 214-amino-acid polypeptide reads, in one-letter code: MALGILGRKVGMTQIFSPEGLAIPVTVVQAGPCTVTQIKTQATDGYNAIQLGYLPTAEKHLTRAQRGHLTKAGVTELLRHLREFRVDQPEAYQLGQKITVEMFSPGQLVDVAGTSIGRGFAGYQKRHHFGRGPMSHGSKNHRRPGSIGAGTTPGRVFPGMRMAGRLGGGRVTTRKLQLVQVDPERDLLVIKGCVPGVEGGLLEITPAKQVGNKR.

The tract at residues F129–F157 is disordered.

Belongs to the universal ribosomal protein uL3 family. Part of the 50S ribosomal subunit. Forms a cluster with proteins L14 and L19.

In terms of biological role, one of the primary rRNA binding proteins, it binds directly near the 3'-end of the 23S rRNA, where it nucleates assembly of the 50S subunit. This is Large ribosomal subunit protein uL3 from Synechococcus sp. (strain JA-2-3B'a(2-13)) (Cyanobacteria bacterium Yellowstone B-Prime).